Reading from the N-terminus, the 1029-residue chain is Huntingtin-interacting protein 1 (1029 aa).

Positions 32 to 160 (ERESFERTQT…EYHTKNPRFP (129 aa)) constitute an ENTH domain. Phosphoserine is present on serine 338. A coiled-coil region spans residues 375–636 (HLIERLYREI…IQEALSQLEE (262 aa)). The pDED stretch occupies residues 410-491 (SELEAELAEQ…HADLLRKNAE (82 aa)). In terms of domain architecture, I/LWEQ spans 763-1004 (GLDIKQEELG…ELRKKHYELA (242 aa)). Positions 859-916 (RWTEGLISASKAVGWGATIMVDAADLVVQGKGKFEELMVCSREIAASTAQLVAASKVK) are important for actin binding. Positions 1009–1029 (GWEEGTEASPSTVQEAIPDKE) are disordered.

This sequence belongs to the SLA2 family. As to quaternary structure, homodimer. Binds actin. Binds HTT (via N-terminus). This interaction is restricted to the brain. Binds to IFT57. In normal conditions, it poorly interacts with IFT57, HIP1 being strongly associated with HTT. However, in mutant HTT proteins with a long poly-Gln region, interaction between HTT and HIP1 is inhibited, promoting the interaction between HIP1 and IFT57. Interacts with CLTB (via N-terminus). Interacts (via coiled coil domain) with AR. Interacts with AP2A1, AP2A2, CLTC and HIP1R. Interacts with GRIA1, GRIN2A and GRIN2B. In terms of tissue distribution, most abundantly expressed in brain. In brain, expressed in cortical tissue, hippocampus, the molecular layer of the cerebellum and olfactory bulb. Also expressed in spinal cord and bone marrow (at protein level). Expressed in reproductive tissues.

It is found in the cytoplasm. The protein resides in the nucleus. The protein localises to the endomembrane system. Its subcellular location is the cytoplasmic vesicle. It localises to the clathrin-coated vesicle membrane. Functionally, plays a role in clathrin-mediated endocytosis and trafficking. Involved in regulating AMPA receptor trafficking in the central nervous system in an NMDA-dependent manner. Regulates presynaptic nerve terminal activity. Enhances androgen receptor (AR)-mediated transcription. May act as a proapoptotic protein that induces cell death by acting through the intrinsic apoptosis pathway. Binds 3-phosphoinositides (via ENTH domain). May act through the ENTH domain to promote cell survival by stabilizing receptor tyrosine kinases following ligand-induced endocytosis. May play a functional role in the cell filament networks. May be required for differentiation, proliferation, and/or survival of somatic and germline progenitors. This is Huntingtin-interacting protein 1 from Mus musculus (Mouse).